Reading from the N-terminus, the 552-residue chain is Putative acetolactate synthase large subunit IlvB2 (552 aa).

Thiamine diphosphate is bound at residue glutamate 48. FAD is bound by residues phenylalanine 262–serine 285 and aspartate 309–serine 328. Positions threonine 394 to glutamine 474 are thiamine pyrophosphate binding. Aspartate 445 contacts Mg(2+).

The protein belongs to the TPP enzyme family. As to quaternary structure, heterodimer of large catalytic subunit and small regulatory subunit. The cofactor is Mg(2+). It depends on thiamine diphosphate as a cofactor.

It carries out the reaction 2 pyruvate + H(+) = (2S)-2-acetolactate + CO2. Its pathway is amino-acid biosynthesis; L-isoleucine biosynthesis; L-isoleucine from 2-oxobutanoate: step 1/4. The protein operates within amino-acid biosynthesis; L-valine biosynthesis; L-valine from pyruvate: step 1/4. Catalyzes the conversion of 2 pyruvate molecules into acetolactate in the first common step of the biosynthetic pathway of the branched-amino acids such as leucine, isoleucine, and valine. The polypeptide is Putative acetolactate synthase large subunit IlvB2 (ilvB2) (Mycobacterium tuberculosis (strain ATCC 25618 / H37Rv)).